We begin with the raw amino-acid sequence, 1029 residues long: Putative guanine nucleotide-exchange factor SED4 (1029 aa).

Over methionine 1–serine 344 the chain is Cytoplasmic. 2 WD repeats span residues lysine 257–leucine 296 and valine 300–serine 339. A helical; Signal-anchor for type II membrane protein membrane pass occupies residues leucine 345–phenylalanine 365. Topologically, residues tyrosine 366 to leucine 1029 are lumenal. N-linked (GlcNAc...) asparagine glycosylation is present at asparagine 579. A compositionally biased stretch (low complexity) spans asparagine 579–serine 592. Disordered stretches follow at residues asparagine 579–valine 673, valine 710–isoleucine 732, and glutamate 747–serine 821. Residues histidine 593–leucine 603 are compositionally biased toward polar residues. A glycan (N-linked (GlcNAc...) asparagine) is linked at asparagine 608. Residues serine 613–methionine 628 are compositionally biased toward basic and acidic residues. The segment covering glutamate 633–aspartate 642 has biased composition (polar residues). Residues asparagine 634 and asparagine 647 are each glycosylated (N-linked (GlcNAc...) asparagine). A compositionally biased stretch (basic and acidic residues) spans lysine 643–aspartate 654. Positions valine 655–isoleucine 672 are enriched in low complexity. Over residues aspartate 712–threonine 722 the composition is skewed to basic and acidic residues. N-linked (GlcNAc...) asparagine glycosylation is found at asparagine 714, asparagine 754, asparagine 774, asparagine 792, asparagine 806, asparagine 855, asparagine 865, asparagine 874, asparagine 884, and asparagine 966. Polar residues-rich tracts occupy residues lysine 750–threonine 762 and arginine 771–threonine 782. Residues glutamate 783 to glutamate 799 show a composition bias toward basic and acidic residues. Over residues serine 800–leucine 812 the composition is skewed to low complexity. A compositionally biased stretch (low complexity) spans leucine 858 to serine 867. Disordered regions lie at residues leucine 858–threonine 886, threonine 963–glutamate 982, and valine 1003–leucine 1029. Over residues valine 868–threonine 886 the composition is skewed to polar residues. The short motif at asparagine 1026 to leucine 1029 is the Prevents secretion from ER element.

Belongs to the WD repeat SEC12 family.

The protein localises to the endoplasmic reticulum membrane. The protein resides in the golgi apparatus membrane. Putative guanine nucleotide-exchange factor (GEF) involved in the formation or budding of transport vesicles from the ER. Positive regulator of SAR1 probably through inhibition of the GTPase activation by SEC23. This is Putative guanine nucleotide-exchange factor SED4 (SED4) from Candida glabrata (strain ATCC 2001 / BCRC 20586 / JCM 3761 / NBRC 0622 / NRRL Y-65 / CBS 138) (Yeast).